Here is a 311-residue protein sequence, read N- to C-terminus: Mediator of RNA polymerase II transcription subunit 27-A (311 aa).

This sequence belongs to the Mediator complex subunit 27 family. In terms of assembly, component of the Mediator complex.

The protein localises to the nucleus. Functionally, component of the Mediator complex, a coactivator involved in the regulated transcription of nearly all RNA polymerase II-dependent genes. Mediator functions as a bridge to convey information from gene-specific regulatory proteins to the basal RNA polymerase II transcription machinery. Mediator is recruited to promoters by direct interactions with regulatory proteins and serves as a scaffold for the assembly of a functional preinitiation complex with RNA polymerase II and the general transcription factors. The protein is Mediator of RNA polymerase II transcription subunit 27-A (med27-a) of Xenopus laevis (African clawed frog).